The sequence spans 338 residues: Ferredoxin--NADP reductase (338 aa).

FAD is bound by residues aspartate 32, glutamine 40, tyrosine 45, valine 85, phenylalanine 120, aspartate 287, and threonine 327.

Belongs to the ferredoxin--NADP reductase type 2 family. Homodimer. Requires FAD as cofactor.

It carries out the reaction 2 reduced [2Fe-2S]-[ferredoxin] + NADP(+) + H(+) = 2 oxidized [2Fe-2S]-[ferredoxin] + NADPH. In Wolbachia pipientis wMel, this protein is Ferredoxin--NADP reductase.